Consider the following 428-residue polypeptide: Trigger factor (428 aa).

The PPIase FKBP-type domain maps to G163–P248.

It belongs to the FKBP-type PPIase family. Tig subfamily.

It localises to the cytoplasm. The enzyme catalyses [protein]-peptidylproline (omega=180) = [protein]-peptidylproline (omega=0). Its function is as follows. Involved in protein export. Acts as a chaperone by maintaining the newly synthesized protein in an open conformation. Functions as a peptidyl-prolyl cis-trans isomerase. The sequence is that of Trigger factor from Ruminiclostridium cellulolyticum (strain ATCC 35319 / DSM 5812 / JCM 6584 / H10) (Clostridium cellulolyticum).